We begin with the raw amino-acid sequence, 313 residues long: tRNA pseudouridine synthase B (313 aa).

D46 serves as the catalytic Nucleophile.

Belongs to the pseudouridine synthase TruB family. Type 1 subfamily.

It catalyses the reaction uridine(55) in tRNA = pseudouridine(55) in tRNA. Its function is as follows. Responsible for synthesis of pseudouridine from uracil-55 in the psi GC loop of transfer RNAs. This Nitrosospira multiformis (strain ATCC 25196 / NCIMB 11849 / C 71) protein is tRNA pseudouridine synthase B.